Reading from the N-terminus, the 274-residue chain is Energy-coupling factor transporter ATP-binding protein EcfA1 (274 aa).

Residues 11–245 (IELKNVKFKY…ERVIEIAKID (235 aa)) form the ABC transporter domain. 45–52 (GHNGSGKS) provides a ligand contact to ATP.

This sequence belongs to the ABC transporter superfamily. Energy-coupling factor EcfA family. Forms a stable energy-coupling factor (ECF) transporter complex composed of 2 membrane-embedded substrate-binding proteins (S component), 2 ATP-binding proteins (A component) and 2 transmembrane proteins (T component).

Its subcellular location is the cell membrane. In terms of biological role, ATP-binding (A) component of a common energy-coupling factor (ECF) ABC-transporter complex. Unlike classic ABC transporters this ECF transporter provides the energy necessary to transport a number of different substrates. In Mycoplasma mobile (strain ATCC 43663 / 163K / NCTC 11711) (Mesomycoplasma mobile), this protein is Energy-coupling factor transporter ATP-binding protein EcfA1.